Here is a 146-residue protein sequence, read N- to C-terminus: MKKRVTIYTDGACSGNPGRGGWGALMMYGTVNRELSGYEPATTNNRMELTAAIEGLDALKEPCVVDLYSDSAYLVNALNQGWLKRWTTNNWTTSAKKSVENIDLWKKILKLVTLHQVTFHKVKGHSDNPFNNRCDELARQAIKNNS.

The region spanning 1-143 (MKKRVTIYTD…CDELARQAIK (143 aa)) is the RNase H type-1 domain. Positions 10, 48, 70, and 135 each coordinate Mg(2+).

Belongs to the RNase H family. In terms of assembly, monomer. Mg(2+) serves as cofactor.

The protein resides in the cytoplasm. The enzyme catalyses Endonucleolytic cleavage to 5'-phosphomonoester.. Functionally, endonuclease that specifically degrades the RNA of RNA-DNA hybrids. In Chlorobium limicola (strain DSM 245 / NBRC 103803 / 6330), this protein is Ribonuclease H.